The following is a 211-amino-acid chain: Ras-related protein Rab-38 (211 aa).

GTP contacts are provided by Gly-19, Val-20, Gly-21, Lys-22, Thr-23, Ser-24, Ser-35, Ser-36, Tyr-38, and Thr-41. Thr-23 is a binding site for Mg(2+). Residues 32-46 (QNFSSHYRATIGVDF) carry the Switch 1 motif. Residues Thr-41 and Asp-65 each coordinate Mg(2+). GTP-binding residues include Gly-68, Lys-128, Asp-130, Ala-160, and Lys-161. The short motif at 68-81 (GQERFGNMTRVYYR) is the Switch 2 element. Cys-205 is lipidated: S-palmitoyl cysteine. The S-geranylgeranyl cysteine moiety is linked to residue Cys-208.

It belongs to the small GTPase superfamily. Rab family. As to quaternary structure, interacts with ANKRD27. The cofactor is Mg(2+).

It localises to the cell membrane. The protein localises to the cytoplasmic vesicle. The protein resides in the phagosome. Its subcellular location is the phagosome membrane. It is found in the melanosome. It localises to the melanosome membrane. It catalyses the reaction GTP + H2O = GDP + phosphate + H(+). Regulated by guanine nucleotide exchange factors (GEFs) including the BLOC-3 complex composed of HPS1 and HPS4 which promote the exchange of bound GDP for free GTP. Regulated by GTPase activating proteins (GAPs) including SGSM2 which increase the GTP hydrolysis activity. Inhibited by GDP dissociation inhibitors (GDIs). The small GTPases Rab are key regulators of intracellular membrane trafficking, from the formation of transport vesicles to their fusion with membranes. Rabs cycle between an inactive GDP-bound form and an active GTP-bound form that is able to recruit to membranes different sets of downstream effectors directly responsible for vesicle formation, movement, tethering and fusion. RAB38 plays a role in the maturation of phagosomes that engulf pathogens, such as S.aureus and Mycobacterium. May be involved in melanosomal transport and docking. Involved in the proper sorting of TYRP1. Involved in peripheral melanosomal distribution of TYRP1 in melanocytes; the function, which probably is implicating vesicle-trafficking, includes cooperation with ANKRD27 and VAMP7. Plays an important role in the control of melanin production and melanosome biogenesis. In concert with RAB32, regulates the proper trafficking of melanogenic enzymes TYR, TYRP1 and DCT/TYRP2 to melanosomes in melanocytes. The sequence is that of Ras-related protein Rab-38 from Mus musculus (Mouse).